The sequence spans 597 residues: UvrABC system protein C (597 aa).

The GIY-YIG domain maps to 14 to 91 (KKPGCYLWKD…INQYQPRFNL (78 aa)).

The protein belongs to the UvrC family. In terms of assembly, interacts with UvrB in an incision complex.

It is found in the cytoplasm. The UvrABC repair system catalyzes the recognition and processing of DNA lesions. UvrC both incises the 5' and 3' sides of the lesion. The N-terminal half is responsible for the 3' incision and the C-terminal half is responsible for the 5' incision. In Mycoplasma genitalium (strain ATCC 33530 / DSM 19775 / NCTC 10195 / G37) (Mycoplasmoides genitalium), this protein is UvrABC system protein C.